A 156-amino-acid chain; its full sequence is MALEKSLVRLLLLVLILLVLGWVQPSLGKESRAKKFQRQHMDSDSSPSSSSTYCNQMMRRRNMTQGRCKPVNTFVHEPLVDVQNVCFQEKVTCKNGQGNCYKSNSSMHITDCRLTNGSRYPNCAYRTSPKERHIIVACEGSPYVPVHFDASVEDST.

The N-terminal stretch at Met-1–Gly-28 is a signal peptide. Residues Ala-33–Ser-43 are compositionally biased toward basic and acidic residues. The tract at residues Ala-33–Tyr-53 is disordered. Residues Lys-35 and Arg-38 each contribute to the substrate site. The Proton acceptor role is filled by His-40. Intrachain disulfides connect Cys-54–Cys-112, Cys-68–Cys-123, Cys-86–Cys-138, and Cys-93–Cys-100. N-linked (GlcNAc...) asparagine; partial glycosylation is present at Asn-62. Substrate-binding positions include Lys-69–Thr-73 and Lys-94. Asn-104 is a glycosylation site (N-linked (GlcNAc...) asparagine). A substrate-binding site is contributed by Arg-113. An N-linked (GlcNAc...) asparagine glycan is attached at Asn-116. Residue His-147 is the Proton donor of the active site.

Belongs to the pancreatic ribonuclease family. As to quaternary structure, monomer. Interacts with and forms tight 1:1 complexes with RNH1. Dimerization of two such complexes may occur. Interaction with RNH1 inhibits this protein. In terms of processing, N-linked glycans are of complex type. In terms of tissue distribution, pancreas and other tissues and body fluids (indicating it may have other physiological functions besides its role in digestion).

It is found in the secreted. The catalysed reaction is an [RNA] containing cytidine + H2O = an [RNA]-3'-cytidine-3'-phosphate + a 5'-hydroxy-ribonucleotide-3'-[RNA].. It catalyses the reaction an [RNA] containing uridine + H2O = an [RNA]-3'-uridine-3'-phosphate + a 5'-hydroxy-ribonucleotide-3'-[RNA].. Functionally, endonuclease that catalyzes the cleavage of RNA on the 3' side of pyrimidine nucleotides. Acts on single-stranded and double-stranded RNA. The protein is Ribonuclease pancreatic (RNASE1) of Homo sapiens (Human).